Reading from the N-terminus, the 465-residue chain is Ribulose bisphosphate carboxylase large chain (465 aa).

Residue K4 is modified to N6,N6,N6-trimethyllysine. The substrate site is built by N113 and T163. K165 acts as the Proton acceptor in catalysis. Residue K167 coordinates substrate. The Mg(2+) site is built by K191, D193, and E194. K191 is subject to N6-carboxylysine. The active-site Proton acceptor is H284. 3 residues coordinate substrate: R285, H317, and S369.

Belongs to the RuBisCO large chain family. Type I subfamily. In terms of assembly, heterohexadecamer of 8 large chains and 8 small chains; disulfide-linked. The disulfide link is formed within the large subunit homodimers. Mg(2+) is required as a cofactor. The disulfide bond which can form in the large chain dimeric partners within the hexadecamer appears to be associated with oxidative stress and protein turnover.

It is found in the plastid. It localises to the chloroplast. The enzyme catalyses 2 (2R)-3-phosphoglycerate + 2 H(+) = D-ribulose 1,5-bisphosphate + CO2 + H2O. It catalyses the reaction D-ribulose 1,5-bisphosphate + O2 = 2-phosphoglycolate + (2R)-3-phosphoglycerate + 2 H(+). Its function is as follows. RuBisCO catalyzes two reactions: the carboxylation of D-ribulose 1,5-bisphosphate, the primary event in carbon dioxide fixation, as well as the oxidative fragmentation of the pentose substrate in the photorespiration process. Both reactions occur simultaneously and in competition at the same active site. In Ilex crenata (Japanese holly), this protein is Ribulose bisphosphate carboxylase large chain.